Here is a 296-residue protein sequence, read N- to C-terminus: MKIRVATRGSKLSLLQTQELLDQVKAVEPKVEFELVVVKTTGDVVQDRPLYQIGVKGIFEKEVNLAVLRGEADVAVHSLKDLPSELTPGLVIAGFSRRAPPYDVVASREGYSLYTLPKGAVVGTSSVRRAEFLRAVRPDVEVRPLRGNVDTRVGKILSGQYDAAIMAMAGLVRLYGWEAPVKLSPIRPEEIPPPPGQGIVVAVVKEGEAWLIDILRRASDRRAAVEATAEREFLMHVGAGCHVAVGGLARYEDGGMSFVAGYASGGRRYVIKLWGEDPREVGRRAAEEIRKIREGD.

Position 241 is an S-(dipyrrolylmethanemethyl)cysteine (Cys-241).

The protein belongs to the HMBS family. Dipyrromethane is required as a cofactor.

It carries out the reaction 4 porphobilinogen + H2O = hydroxymethylbilane + 4 NH4(+). The protein operates within porphyrin-containing compound metabolism; protoporphyrin-IX biosynthesis; coproporphyrinogen-III from 5-aminolevulinate: step 2/4. Its function is as follows. Tetrapolymerization of the monopyrrole PBG into the hydroxymethylbilane pre-uroporphyrinogen in several discrete steps. This Pyrobaculum calidifontis (strain DSM 21063 / JCM 11548 / VA1) protein is Probable porphobilinogen deaminase.